A 72-amino-acid polypeptide reads, in one-letter code: Cytochrome c oxidase subunit 8C, mitochondrial (72 aa).

The transit peptide at Met1–Ser29 directs the protein to the mitochondrion. The Mitochondrial matrix portion of the chain corresponds to His30–Ser40. Residues Pro41–Ser64 traverse the membrane as a helical segment. Residues Ser65–Glu72 are Mitochondrial intermembrane-facing.

It belongs to the cytochrome c oxidase VIII family. Component of the cytochrome c oxidase (complex IV, CIV), a multisubunit enzyme composed of 14 subunits. The complex is composed of a catalytic core of 3 subunits MT-CO1, MT-CO2 and MT-CO3, encoded in the mitochondrial DNA, and 11 supernumerary subunits COX4I, COX5A, COX5B, COX6A, COX6B, COX6C, COX7A, COX7B, COX7C, COX8 and NDUFA4, which are encoded in the nuclear genome. The complex exists as a monomer or a dimer and forms supercomplexes (SCs) in the inner mitochondrial membrane with NADH-ubiquinone oxidoreductase (complex I, CI) and ubiquinol-cytochrome c oxidoreductase (cytochrome b-c1 complex, complex III, CIII), resulting in different assemblies (supercomplex SCI(1)III(2)IV(1) and megacomplex MCI(2)III(2)IV(2)).

The protein localises to the mitochondrion inner membrane. The protein operates within energy metabolism; oxidative phosphorylation. Component of the cytochrome c oxidase, the last enzyme in the mitochondrial electron transport chain which drives oxidative phosphorylation. The respiratory chain contains 3 multisubunit complexes succinate dehydrogenase (complex II, CII), ubiquinol-cytochrome c oxidoreductase (cytochrome b-c1 complex, complex III, CIII) and cytochrome c oxidase (complex IV, CIV), that cooperate to transfer electrons derived from NADH and succinate to molecular oxygen, creating an electrochemical gradient over the inner membrane that drives transmembrane transport and the ATP synthase. Cytochrome c oxidase is the component of the respiratory chain that catalyzes the reduction of oxygen to water. Electrons originating from reduced cytochrome c in the intermembrane space (IMS) are transferred via the dinuclear copper A center (CU(A)) of subunit 2 and heme A of subunit 1 to the active site in subunit 1, a binuclear center (BNC) formed by heme A3 and copper B (CU(B)). The BNC reduces molecular oxygen to 2 water molecules using 4 electrons from cytochrome c in the IMS and 4 protons from the mitochondrial matrix. The sequence is that of Cytochrome c oxidase subunit 8C, mitochondrial (Cox8c) from Mus musculus (Mouse).